Consider the following 274-residue polypeptide: Large ribosomal subunit protein uL2 (274 aa).

Positions 223 to 274 are disordered; the sequence is VAMNPVDHPHGGGEGKTSGGRHPVSPWGVPTKGYKTRSNKRTDKFIVRRRAK.

This sequence belongs to the universal ribosomal protein uL2 family. In terms of assembly, part of the 50S ribosomal subunit. Forms a bridge to the 30S subunit in the 70S ribosome.

In terms of biological role, one of the primary rRNA binding proteins. Required for association of the 30S and 50S subunits to form the 70S ribosome, for tRNA binding and peptide bond formation. It has been suggested to have peptidyltransferase activity; this is somewhat controversial. Makes several contacts with the 16S rRNA in the 70S ribosome. The polypeptide is Large ribosomal subunit protein uL2 (Colwellia psychrerythraea (strain 34H / ATCC BAA-681) (Vibrio psychroerythus)).